The sequence spans 376 residues: Transcription factor TEOSINTE BRANCHED 1 (376 aa).

The region spanning 114-172 (RKDRHSKICTAGGMRDRRMRLSLDVARKFFALQDMLGFDKASKTVQWLLNTSKSAIQEI) is the TCP domain. Disordered regions lie at residues 179–266 (SECV…KHRM) and 280–299 (AAAS…HHSS). Composition is skewed to basic and acidic residues over residues 207–219 (QKPK…EGKK) and 243–261 (VPDK…ERTK). A R domain is found at 246 to 263 (KETRAKARERARERTKEK). A compositionally biased stretch (low complexity) spans 290-299 (SSNNLSHHSS).

Expressed in axillary inflorescence primordia, immature internodes below these primordia, and immature husk surrounding these primordia.

The protein localises to the nucleus. In terms of biological role, transcription factor. Involved in apical dominance. Represses the growth of axillary organs (e.g. lateral branches), but enables the formation of female inflorescences. Regulates the number and length of axillary branches. The chain is Transcription factor TEOSINTE BRANCHED 1 (TB1) from Zea mays (Maize).